Consider the following 404-residue polypeptide: MNTVDIGRCSKRIVQYLWDPEPRNDEDPNSSIWCLGIEYHPDKDANTRETPDKNNTRENVMGTTNYRKPSEHAWPESFLLDFESRIWMTYRSNFPPIPRVEGDDKSASMTLGVRLRSQLVDTQGFTSDTGWGCMIRSGQSLLANALSMLVLGRDWRRGARFEEESQLLSLFADTPTAPFSVHRFVKHGAESCGKYPGEWFGPSATAKCIEALSSQCGNPTLKVYVSNDTSEVYQDKFMDIARNTSGAFQPTLILLGTRLGIDNITPVYWDGLKAALQFPQSVGIAGGRPSASHYFVGAQGSHLFYLDPHYTRPALPDRQEGELYSKEEVDTYHTRRLRRIHVRDMDPSMLIGFLIRNQEDWADWLKRIEAVKGRPIIHVLKQMNPDHDQEAGALDQVEALDDIE.

The active-site Nucleophile is C133. Active-site residues include D307 and H309.

It belongs to the peptidase C54 family.

The protein localises to the cytoplasm. It localises to the nucleus. It is found in the preautophagosomal structure. It carries out the reaction [protein]-C-terminal L-amino acid-glycyl-phosphatidylethanolamide + H2O = [protein]-C-terminal L-amino acid-glycine + a 1,2-diacyl-sn-glycero-3-phosphoethanolamine. Functionally, cysteine protease that plays a key role in cytoplasm to vacuole transport (Cvt) and autophagy by mediating both proteolytic activation and delipidation of ATG8. Required for selective autophagic degradation of the nucleus (nucleophagy) as well as for mitophagy which contributes to regulate mitochondrial quantity and quality by eliminating the mitochondria to a basal level to fulfill cellular energy requirements and preventing excess ROS production. The protease activity is required for proteolytic activation of ATG8: cleaves the C-terminal amino acid of ATG8 to reveal a C-terminal glycine. ATG8 ubiquitin-like activity requires the exposure of the glycine at the C-terminus for its conjugation to phosphatidylethanolamine (PE) and its insertion to membranes, which is necessary for autophagy. The ATG8-PE conjugate mediates tethering between adjacent membranes and stimulates membrane hemifusion, leading to expansion of the autophagosomal membrane during autophagy. In addition to the protease activity, also catalyzes deconjugation of PE-conjugated forms of ATG8 during macroautophagy: ATG8 delipidation is required to release the protein from membranes, which facilitates multiple events during macroautophagy, and especially for efficient autophagosome biogenesis, the assembly of ATG9-containing tubulovesicular clusters into phagophores/autophagosomes, and for the disassembly of PAS-associated ATG components. ATG8 delipidation by ATG4 also recycles ATG8-PE generated on inappropriate membranes to maintain a reservoir of unlipidated ATG8 that is required for autophagosome formation at the PAS. The sequence is that of Probable cysteine protease atg4 (atg4) from Aspergillus niger (strain ATCC MYA-4892 / CBS 513.88 / FGSC A1513).